We begin with the raw amino-acid sequence, 469 residues long: Glutamine synthetase (469 aa).

One can recognise a GS beta-grasp domain in the interval 14–99; it reads NDVKFVDLRF…FCDILDPVSG (86 aa). In terms of domain architecture, GS catalytic spans 106–469; sequence PRGTAKKAEA…PVEFDMYYSV (364 aa). Mg(2+) is bound by residues Glu131 and Glu133. Glu209 is an ATP binding site. Residues Glu214 and Glu221 each coordinate Mg(2+). L-glutamate is bound by residues 265-266 and Gly266; that span reads NG. His270 lines the Mg(2+) pocket. ATP is bound by residues 272–274 and Ser274; that span reads HLS. The L-glutamate site is built by Arg322, Glu328, and Arg340. Arg340, Arg345, and Lys353 together coordinate ATP. Glu358 is a Mg(2+) binding site. Arg360 is a binding site for L-glutamate. An O-AMP-tyrosine modification is found at Tyr398.

This sequence belongs to the glutamine synthetase family. In terms of assembly, oligomer of 12 subunits arranged in the form of two hexameric ring. Requires Mg(2+) as cofactor.

The protein localises to the cytoplasm. It catalyses the reaction L-glutamate + NH4(+) + ATP = L-glutamine + ADP + phosphate + H(+). Its activity is regulated as follows. The activity of this enzyme could be controlled by adenylation under conditions of abundant glutamine. Functionally, catalyzes the ATP-dependent biosynthesis of glutamine from glutamate and ammonia. In Rhizobium meliloti (strain 1021) (Ensifer meliloti), this protein is Glutamine synthetase.